Reading from the N-terminus, the 913-residue chain is Protein translocase subunit SecA (913 aa).

ATP contacts are provided by residues Q87, 105–109 (GEGKT), and D512. C897, C899, C908, and H909 together coordinate Zn(2+).

Belongs to the SecA family. As to quaternary structure, monomer and homodimer. Part of the essential Sec protein translocation apparatus which comprises SecA, SecYEG and auxiliary proteins SecDF-YajC and YidC. Requires Zn(2+) as cofactor.

It localises to the cell inner membrane. The protein resides in the cytoplasm. It catalyses the reaction ATP + H2O + cellular proteinSide 1 = ADP + phosphate + cellular proteinSide 2.. Part of the Sec protein translocase complex. Interacts with the SecYEG preprotein conducting channel. Has a central role in coupling the hydrolysis of ATP to the transfer of proteins into and across the cell membrane, serving both as a receptor for the preprotein-SecB complex and as an ATP-driven molecular motor driving the stepwise translocation of polypeptide chains across the membrane. In Pseudomonas fluorescens (strain ATCC BAA-477 / NRRL B-23932 / Pf-5), this protein is Protein translocase subunit SecA.